The primary structure comprises 257 residues: NAD-capped RNA hydrolase NudC (257 aa).

Substrate is bound at residue R69. Zn(2+) is bound by residues C98 and C101. E111 is a binding site for substrate. Residues C116 and C119 each contribute to the Zn(2+) site. Y124 is a substrate binding site. Residues 125–248 (PQIAPCIIVA…TVARRLIEDT (124 aa)) form the Nudix hydrolase domain. Positions 158, 174, and 178 each coordinate a divalent metal cation. Residues 159 to 180 (GFVEVGETLEQAVAREVMEESG) carry the Nudix box motif. Position 192-199 (192-199 (QPWPFPQS)) interacts with substrate. An a divalent metal cation-binding site is contributed by E219. A241 is a binding site for substrate.

Belongs to the Nudix hydrolase family. NudC subfamily. Homodimer. It depends on Mg(2+) as a cofactor. Mn(2+) is required as a cofactor. Zn(2+) serves as cofactor.

It catalyses the reaction a 5'-end NAD(+)-phospho-ribonucleoside in mRNA + H2O = a 5'-end phospho-adenosine-phospho-ribonucleoside in mRNA + beta-nicotinamide D-ribonucleotide + 2 H(+). The catalysed reaction is NAD(+) + H2O = beta-nicotinamide D-ribonucleotide + AMP + 2 H(+). It carries out the reaction NADH + H2O = reduced beta-nicotinamide D-ribonucleotide + AMP + 2 H(+). MRNA decapping enzyme that specifically removes the nicotinamide adenine dinucleotide (NAD) cap from a subset of mRNAs by hydrolyzing the diphosphate linkage to produce nicotinamide mononucleotide (NMN) and 5' monophosphate mRNA. The NAD-cap is present at the 5'-end of some mRNAs and stabilizes RNA against 5'-processing. Has preference for mRNAs with a 5'-end purine. Catalyzes the hydrolysis of a broad range of dinucleotide pyrophosphates. This is NAD-capped RNA hydrolase NudC from Salmonella schwarzengrund (strain CVM19633).